A 477-amino-acid polypeptide reads, in one-letter code: Ankyrin repeat, SAM and basic leucine zipper domain-containing protein 1 (477 aa).

The disordered stretch occupies residues 1–24 (MATSALRGLAVAGGGESSESEDDG). A phosphoserine mark is found at S17, S18, and S20. ANK repeat units follow at residues 46 to 76 (EKKEKFKKALTTGDVSLVQELLDSGIISVDA), 80 to 109 (YGWTPLMYAASVANAELVRVLLDRGANASF), 112 to 146 (DKQTILITACSAHGSEEQILKCVELLLSRNADPNV), 150 to 179 (RLMTPIMYAARDGHTQVVALLVASGAEVNT), 183 to 212 (NGYTALTWAARQGHKSIVLKLLELGANKML), and 216 to 245 (DGKLPSEIAKRNKHHEIFNLLSFTLNPLEG). An SAM domain is found at 274-336 (SYAEFGDLEV…KILAALKELE (63 aa)).

As to quaternary structure, interacts with DDX4, PIWIL1, RANBP9 and TDRD1.

It localises to the cytoplasm. Functionally, plays a central role during spermatogenesis by repressing transposable elements and preventing their mobilization, which is essential for the germline integrity. Acts via the piRNA metabolic process, which mediates the repression of transposable elements during meiosis by forming complexes composed of piRNAs and Piwi proteins and governs the methylation and subsequent repression of transposons. Its association with pi-bodies suggests a participation in the primary piRNAs metabolic process. Required prior to the pachytene stage to facilitate the production of multiple types of piRNAs, including those associated with repeats involved in the regulation of retrotransposons. May act by mediating protein-protein interactions during germ cell maturation. The protein is Ankyrin repeat, SAM and basic leucine zipper domain-containing protein 1 (ASZ1) of Saimiri boliviensis boliviensis (Bolivian squirrel monkey).